A 282-amino-acid chain; its full sequence is MSNFSMETLKLLRQQTGVGLTKCKEALAECNGNLEEAVVYLRKLGLASASKKEHRETKEGVIAAKSDARGTAIVEVNVETDFVANNAVFRSFVDGLVEDVLNHKADNVDALLQLPSFQDASLTVDELRAVTMQTVGENIRISRIKYFPKTTEESVGIYSHGNGKAVSITILSGLSDQESLAKDISMHIVAAQPLFLSKESVPEDALAKEKEIISSQIQGKPQAVIDKIISGKLGTFFQDVCLLEQAYIKNPDTTIQHLINGVSKTSGNSVEVKEFILWKIGA.

The tract at residues 80–83 (TDFV) is involved in Mg(2+) ion dislocation from EF-Tu.

Belongs to the EF-Ts family.

It localises to the cytoplasm. Associates with the EF-Tu.GDP complex and induces the exchange of GDP to GTP. It remains bound to the aminoacyl-tRNA.EF-Tu.GTP complex up to the GTP hydrolysis stage on the ribosome. The polypeptide is Elongation factor Ts (Chlamydia felis (strain Fe/C-56) (Chlamydophila felis)).